Here is a 282-residue protein sequence, read N- to C-terminus: ATP synthase subunit a (282 aa).

Helical transmembrane passes span 45-65 (AIHV…LWLF), 106-126 (IAPL…MDLI), 160-179 (INAT…FYSI), 232-252 (LIFI…SVPW), and 253-273 (AIFH…LTIV).

This sequence belongs to the ATPase A chain family. In terms of assembly, F-type ATPases have 2 components, CF(1) - the catalytic core - and CF(0) - the membrane proton channel. CF(1) has five subunits: alpha(3), beta(3), gamma(1), delta(1), epsilon(1). CF(0) has three main subunits: a(1), b(2) and c(9-12). The alpha and beta chains form an alternating ring which encloses part of the gamma chain. CF(1) is attached to CF(0) by a central stalk formed by the gamma and epsilon chains, while a peripheral stalk is formed by the delta and b chains.

It localises to the cell inner membrane. Functionally, key component of the proton channel; it plays a direct role in the translocation of protons across the membrane. This chain is ATP synthase subunit a, found in Marinomonas sp. (strain MWYL1).